Here is a 169-residue protein sequence, read N- to C-terminus: 2-C-methyl-D-erythritol 2,4-cyclodiphosphate synthase (169 aa).

Residues Asp-13 and His-15 each coordinate a divalent metal cation. Residues 13–15 (DIH) and 40–41 (HS) each bind 4-CDP-2-C-methyl-D-erythritol 2-phosphate. His-48 serves as a coordination point for a divalent metal cation. Residues 62 to 64 (DIG), 138 to 141 (TTNE), and Arg-148 each bind 4-CDP-2-C-methyl-D-erythritol 2-phosphate.

This sequence belongs to the IspF family. As to quaternary structure, homotrimer. It depends on a divalent metal cation as a cofactor.

It catalyses the reaction 4-CDP-2-C-methyl-D-erythritol 2-phosphate = 2-C-methyl-D-erythritol 2,4-cyclic diphosphate + CMP. Its pathway is isoprenoid biosynthesis; isopentenyl diphosphate biosynthesis via DXP pathway; isopentenyl diphosphate from 1-deoxy-D-xylulose 5-phosphate: step 4/6. In terms of biological role, involved in the biosynthesis of isopentenyl diphosphate (IPP) and dimethylallyl diphosphate (DMAPP), two major building blocks of isoprenoid compounds. Catalyzes the conversion of 4-diphosphocytidyl-2-C-methyl-D-erythritol 2-phosphate (CDP-ME2P) to 2-C-methyl-D-erythritol 2,4-cyclodiphosphate (ME-CPP) with a corresponding release of cytidine 5-monophosphate (CMP). The protein is 2-C-methyl-D-erythritol 2,4-cyclodiphosphate synthase of Akkermansia muciniphila (strain ATCC BAA-835 / DSM 22959 / JCM 33894 / BCRC 81048 / CCUG 64013 / CIP 107961 / Muc).